A 718-amino-acid chain; its full sequence is SANT and BTB domain regulator of class switch recombination (718 aa).

One can recognise an SANT domain in the interval 21 to 59 (DMILYPLIGIPQTINWETIARLVPGLTPKECAKRFDELK). A compositionally biased stretch (polar residues) spans 118 to 134 (ASTRNCSSESENCTTHN). The segment at 118–142 (ASTRNCSSESENCTTHNGGEMTEES) is disordered. Positions 147–255 (MVIHVCDEAK…QCIQYCHKNM (109 aa)) constitute a BTB domain. Over residues 555–576 (SEEEEYTTGSEVTEDEVGDEEE) the composition is skewed to acidic residues. Disordered stretches follow at residues 555-622 (SEEE…SPFV) and 692-718 (SVPVSARQSSSEKNTRSKSRFGQGRPA). A compositionally biased stretch (basic residues) spans 580–595 (KQRKKEKPKKFTRQPK). Over residues 604-615 (QRKEKALEKSAS) the composition is skewed to basic and acidic residues.

Belongs to the KIAA1841 family. In terms of assembly, homodimer. Interacts (via the BTB domain) with HDAC1 and NCOR2.

Its function is as follows. Negatively regulates class switch recombination or isotype switching in splenic B-cells. In Homo sapiens (Human), this protein is SANT and BTB domain regulator of class switch recombination.